We begin with the raw amino-acid sequence, 249 residues long: DNA polymerase sliding clamp 1 (249 aa).

It belongs to the PCNA family. Homotrimer. The subunits circularize to form a toroid; DNA passes through its center. Replication factor C (RFC) is required to load the toroid on the DNA. Interacts with TIP.

Inhibited by interaction with the PCNA inhibitor TIP. Functionally, sliding clamp subunit that acts as a moving platform for DNA processing. Responsible for tethering the catalytic subunit of DNA polymerase and other proteins to DNA during high-speed replication. The chain is DNA polymerase sliding clamp 1 from Thermococcus kodakarensis (strain ATCC BAA-918 / JCM 12380 / KOD1) (Pyrococcus kodakaraensis (strain KOD1)).